A 1156-amino-acid polypeptide reads, in one-letter code: Mastermind-like protein 2 (1156 aa).

The interval 81–165 (QHGQGARKAG…PPASTPGDQR (85 aa)) is disordered. Over residues 113 to 122 (PAASQAAATA) the composition is skewed to low complexity. The span at 153–165 (EQQPPASTPGDQR) shows a compositional bias: polar residues. Phosphoserine is present on serine 175. Disordered regions lie at residues 340-359 (FNID…SLPM), 369-506 (SPGL…GSGQ), 531-630 (QQKP…QQQQ), 658-680 (QQQQ…QPLL), 705-743 (YQVS…GYMN), 784-820 (IAPQ…YSGG), and 1059-1100 (LPNL…FQGT). 4 stretches are compositionally biased toward polar residues: residues 344-354 (LGQQSQRSTPR), 371-380 (GLTQGPSGSP), 393-419 (MANS…TGSG), and 428-437 (QEVSHAQQLK). Positions 440 to 470 (AANRQQHARMQQHQQQHQPTNWSALPSSAGP) are enriched in low complexity. 3 stretches are compositionally biased toward polar residues: residues 484–496 (SFGQ…QSSP), 532–543 (QKPQDLSRSFIN), and 563–587 (NSDQ…LHYT). A compositionally biased stretch (low complexity) spans 588 to 630 (QQQQQQQQQQQQQQQQQQQQQQQQQQQQQQQQQQSSISAQQQQ). 2 stretches are compositionally biased toward low complexity: residues 706-725 (QVSQ…NTGP) and 733-743 (SNPNTGSGYMN). The span at 807-820 (NVGNMQPTAQYSGG) shows a compositional bias: polar residues.

This sequence belongs to the mastermind family. Interacts through its N-terminal region with the ankyrin repeat region of the Notch proteins NOTCH1, NOTCH2, NOTCH3 and NOTCH4. Forms a DNA-binding complex with Notch proteins and RBPSUH/RBP-J kappa. Widely expressed with high levels detected in placenta, salivary gland and skeletal muscle.

The protein resides in the nucleus speckle. Acts as a transcriptional coactivator for NOTCH proteins. Has been shown to amplify NOTCH-induced transcription of HES1. Potentiates activation by NOTCH3 and NOTCH4 more efficiently than MAML1 or MAML3. The polypeptide is Mastermind-like protein 2 (MAML2) (Homo sapiens (Human)).